A 365-amino-acid polypeptide reads, in one-letter code: tRNA/tmRNA (uracil-C(5))-methyltransferase (365 aa).

Residues Gln189, Tyr217, Asn222, Glu238, and Asp298 each coordinate S-adenosyl-L-methionine. The Nucleophile role is filled by Cys323. Glu357 functions as the Proton acceptor in the catalytic mechanism.

The protein belongs to the class I-like SAM-binding methyltransferase superfamily. RNA M5U methyltransferase family. TrmA subfamily.

It carries out the reaction uridine(54) in tRNA + S-adenosyl-L-methionine = 5-methyluridine(54) in tRNA + S-adenosyl-L-homocysteine + H(+). The catalysed reaction is uridine(341) in tmRNA + S-adenosyl-L-methionine = 5-methyluridine(341) in tmRNA + S-adenosyl-L-homocysteine + H(+). In terms of biological role, dual-specificity methyltransferase that catalyzes the formation of 5-methyluridine at position 54 (m5U54) in all tRNAs, and that of position 341 (m5U341) in tmRNA (transfer-mRNA). This Pseudoalteromonas atlantica (strain T6c / ATCC BAA-1087) protein is tRNA/tmRNA (uracil-C(5))-methyltransferase.